Here is a 155-residue protein sequence, read N- to C-terminus: MAEPATDTILVLNGPNLNMLGTREPEKYGHATLADVEALCRETAASFGLKADCRQSNREGELIDFIHEAHARKMKGIIINAGGYSHTSIALHDALLAVQIPTVEVHVTNIHARESFRHHSYTARAAFASLCGFGIEGYRLAIQGLAAKLGLKPKA.

Y28 serves as the catalytic Proton acceptor. Positions 80, 86, and 93 each coordinate substrate. H106 serves as the catalytic Proton donor. Substrate-binding positions include 107–108 and R117; that span reads VT.

It belongs to the type-II 3-dehydroquinase family. As to quaternary structure, homododecamer.

The catalysed reaction is 3-dehydroquinate = 3-dehydroshikimate + H2O. It functions in the pathway metabolic intermediate biosynthesis; chorismate biosynthesis; chorismate from D-erythrose 4-phosphate and phosphoenolpyruvate: step 3/7. Its function is as follows. Catalyzes a trans-dehydration via an enolate intermediate. This is 3-dehydroquinate dehydratase 1 (aroQ1) from Bradyrhizobium diazoefficiens (strain JCM 10833 / BCRC 13528 / IAM 13628 / NBRC 14792 / USDA 110).